A 221-amino-acid chain; its full sequence is GFP-like non-fluorescent chromoprotein (221 aa).

The 2-iminomethyl-5-imidazolinone (Gln-Gly) cross-link spans 62–64 (QYG). At Tyr-63 the chain carries (E)-2,3-didehydrotyrosine.

This sequence belongs to the GFP family. In terms of assembly, homotetramer. Contains a chromophore consisting of modified amino acid residues. The chromophore is formed by autocatalytic backbone condensation between Xaa-N and Gly-(N+2), oxidation of Tyr-(N+1) to didehydrotyrosine, and formation of a double bond to the alpha-amino nitrogen of residue Xaa-N. Maturation of the chromophore requires nothing other than molecular oxygen.

Thought to play a role in photoprotection of the coral's resident symbiont microalgae's photosystems from photoinhibition caused by high light levels found near the surface of coral reefs. This Montipora efflorescens (Pore coral) protein is GFP-like non-fluorescent chromoprotein.